A 535-amino-acid chain; its full sequence is GMP synthase [glutamine-hydrolyzing] (535 aa).

The region spanning 24-217 (KILIVDFGSQ…VRKVAGLTGD (194 aa)) is the Glutamine amidotransferase type-1 domain. Catalysis depends on cysteine 101, which acts as the Nucleophile. Active-site residues include histidine 191 and glutamate 193. Residues 218–410 (WTMRAFREEA…LGLPEIFVGR (193 aa)) enclose the GMPS ATP-PPase domain. Position 245 to 251 (245 to 251 (SGGVDSS)) interacts with ATP.

As to quaternary structure, homodimer.

The enzyme catalyses XMP + L-glutamine + ATP + H2O = GMP + L-glutamate + AMP + diphosphate + 2 H(+). The protein operates within purine metabolism; GMP biosynthesis; GMP from XMP (L-Gln route): step 1/1. Catalyzes the synthesis of GMP from XMP. The sequence is that of GMP synthase [glutamine-hydrolyzing] from Nitrobacter winogradskyi (strain ATCC 25391 / DSM 10237 / CIP 104748 / NCIMB 11846 / Nb-255).